The sequence spans 93 residues: Large ribosomal subunit protein uL23cz/uL23cy (93 aa).

Belongs to the universal ribosomal protein uL23 family. In terms of assembly, part of the 50S ribosomal subunit.

It localises to the plastid. The protein resides in the chloroplast. Its function is as follows. Binds to 23S rRNA. The polypeptide is Large ribosomal subunit protein uL23cz/uL23cy (rpl23-A) (Oryza nivara (Indian wild rice)).